Reading from the N-terminus, the 95-residue chain is Protein E7 (95 aa).

The E7 terminal domain stretch occupies residues 1 to 40; that stretch reads MIGKEATIPDIVLELQQLVQPTDLHCYEELSEEETETEEE. The short motif at 24-28 is the LXCXE motif; interaction with host RB1 and TMEM173/STING element; sequence LHCYE. A zinc finger spans residues 52 to 88; it reads CCFCGSKLRLIVLATHAGIRSQEELLLGEVQLVCPNC. The short motif at 70 to 78 is the Nuclear export signal element; sequence IRSQEELLL.

The protein belongs to the papillomaviridae E7 protein family. Homodimer. Homooligomer. Interacts with host RB1; this interaction induces dissociation of RB1-E2F1 complex thereby disrupting RB1 activity. Interacts with host EP300; this interaction represses EP300 transcriptional activity. Interacts with protein E2; this interaction inhibits E7 oncogenic activity. Interacts with host TMEM173/STING; this interaction impairs the ability of TMEM173/STING to sense cytosolic DNA and promote the production of type I interferon (IFN-alpha and IFN-beta). In terms of processing, highly phosphorylated.

The protein resides in the host cytoplasm. It localises to the host nucleus. Its function is as follows. Plays a role in viral genome replication by driving entry of quiescent cells into the cell cycle. Stimulation of progression from G1 to S phase allows the virus to efficiently use the cellular DNA replicating machinery to achieve viral genome replication. E7 protein has both transforming and trans-activating activities. Induces the disassembly of the E2F1 transcription factor from RB1, with subsequent transcriptional activation of E2F1-regulated S-phase genes. Interferes with host histone deacetylation mediated by HDAC1 and HDAC2, leading to transcription activation. Also plays a role in the inhibition of both antiviral and antiproliferative functions of host interferon alpha. Interaction with host TMEM173/STING impairs the ability of TMEM173/STING to sense cytosolic DNA and promote the production of type I interferon (IFN-alpha and IFN-beta). This Human papillomavirus 17 protein is Protein E7.